A 206-amino-acid polypeptide reads, in one-letter code: Probable glutathione S-transferase 7 (206 aa).

Residues 2–79 enclose the GST N-terminal domain; it reads VHYKVSYFPI…YLARQFGING (78 aa). Residues Tyr-8, Trp-39, Lys-43, 49–51, and 63–64 contribute to the glutathione site; these read GQL and QS. One can recognise a GST C-terminal domain in the interval 81–206; that stretch reads CAWEEAQVNS…WLETRPVTPF (126 aa).

It belongs to the GST superfamily. Sigma family.

It carries out the reaction RX + glutathione = an S-substituted glutathione + a halide anion + H(+). Functionally, conjugation of reduced glutathione to a wide number of exogenous and endogenous hydrophobic electrophiles. May play a role in the detoxification of reactive oxygen species produced during pathogenic bacterial infection. The polypeptide is Probable glutathione S-transferase 7 (gst-7) (Caenorhabditis elegans).